A 500-amino-acid chain; its full sequence is Na(+)/H(+) antiporter NhaB (500 aa).

A run of 12 helical transmembrane segments spans residues phenylalanine 28–glycine 50, glycine 68–alanine 88, leucine 98–phenylalanine 118, leucine 121–leucine 141, phenylalanine 145–valine 165, leucine 205–proline 225, glutamine 244–glutamate 264, valine 311–isoleucine 331, phenylalanine 350–isoleucine 370, methionine 394–isoleucine 414, valine 449–leucine 469, and methionine 477–serine 497.

This sequence belongs to the NhaB Na(+)/H(+) (TC 2.A.34) antiporter family.

The protein resides in the cell inner membrane. The enzyme catalyses 2 Na(+)(in) + 3 H(+)(out) = 2 Na(+)(out) + 3 H(+)(in). Na(+)/H(+) antiporter that extrudes sodium in exchange for external protons. This is Na(+)/H(+) antiporter NhaB from Pseudomonas aeruginosa (strain UCBPP-PA14).